The primary structure comprises 221 residues: MEVQKEAQRIMTLSVWKMYHSRMQRGGLRLHRSLQLSLVMRSAREVYLSAKVEAHQPEFPPSRRALDPRLHPPREAEVAVEVASPEAVQPPEPMDTQEEVLRVQETPALCDPPPARVSRKRRSSSDLSDGSDAGLVPSKKARLEEVEGEATSEVPDRLQLPPAQSEGAFPNLARVLQRRFSSLLNCGPAVPPPTPPTCEAKPACRPADNMLNVLVRAVVAF.

Met1 is modified (N-acetylmethionine). Residues 105–155 (ETPALCDPPPARVSRKRRSSSDLSDGSDAGLVPSKKARLEEVEGEATSEVP) are disordered. Residues 125-136 (SDLSDGSDAGLV) are compositionally biased toward low complexity.

The protein belongs to the IER family.

It is found in the cytoplasm. Its subcellular location is the nucleus. In terms of biological role, DNA-binding protein that seems to act as a transcription factor. Involved in the regulation of neuronal differentiation, acts upon JNK-signaling pathway activation and plays a role in neurite outgrowth in hippocampal cells. May mediate with FIBP FGF-signaling in the establishment of laterality in the embryo. Promotes cell motility, seems to stimulate tumor metastasis. The sequence is that of Immediate early response gene 2 protein (Ier2) from Mus musculus (Mouse).